A 418-amino-acid chain; its full sequence is Delta(14)-sterol reductase TM7SF2 (418 aa).

Helical transmembrane passes span 13-35 (FGGP…HLLL), 62-81 (ALLL…LLPA), 102-124 (GFQA…LPLG), 129-148 (MLLP…SLLL), 255-277 (FGFM…QAQF), and 287-304 (LPMA…YYIF). NADP(+) contacts are provided by residues K311, R315, L338, W343, and 350–351 (NY). A helical transmembrane segment spans residues 355–377 (LIMALAWSLPCGLSHLLPYFYVL). NADP(+) is bound by residues D390, 394 to 398 (CLQKY), and Y405.

It belongs to the ERG4/ERG24 family. As to expression, strongly expressed in liver, weaker in ovary, testis, kidney and brain.

It localises to the endoplasmic reticulum membrane. The protein localises to the microsome membrane. The catalysed reaction is 4,4-dimethyl-5alpha-cholesta-8,24-dien-3beta-ol + NADP(+) = 4,4-dimethyl-5alpha-cholesta-8,14,24-trien-3beta-ol + NADPH + H(+). The enzyme catalyses 5alpha-cholest-8,14-dien-3beta-ol + NADPH + H(+) = 5alpha-cholest-8-en-3beta-ol + NADP(+). It carries out the reaction 4,4-dimethyl-8,14-cholestadien-3beta-ol + NADPH + H(+) = 4,4-dimethyl-5alpha-cholest-8-en-3beta-ol + NADP(+). Its pathway is steroid biosynthesis; cholesterol biosynthesis. Its function is as follows. Catalyzes the reduction of the C14-unsaturated bond of lanosterol, as part of the metabolic pathway leading to cholesterol biosynthesis. The chain is Delta(14)-sterol reductase TM7SF2 (Tm7sf2) from Mus musculus (Mouse).